Reading from the N-terminus, the 246-residue chain is MGAVTVRGLRRAFGSHVVLDQLDLTIAESEFVALVGRSGGGKTTLLRTLAGLDPVAEGSVEVPALRSVVFQEPRLLPWRRVWQNVALGLPRSRGRDEATKALAEVGLADHARAWPLTLSGGEAQRVALARALVREPELLLLDEPFGALDALTRIHMHALVRQLHERHRPAVLLVTHDVDEALELADRVIVLRDGRLDEQIETRELFDDRRDPRFEQARARLLGLLGVTDTHVADPTATPSSAATAP.

One can recognise an ABC transporter domain in the interval 4-218 (VTVRGLRRAF…RRDPRFEQAR (215 aa)). 36 to 43 (GRSGGGKT) lines the ATP pocket.

It belongs to the ABC transporter superfamily. Aliphatic sulfonates importer (TC 3.A.1.17.2) family. In terms of assembly, the complex is composed of two ATP-binding proteins (SsuB), two transmembrane proteins (SsuC) and a solute-binding protein (SsuA).

It localises to the cell membrane. The catalysed reaction is ATP + H2O + aliphatic sulfonate-[sulfonate-binding protein]Side 1 = ADP + phosphate + aliphatic sulfonateSide 2 + [sulfonate-binding protein]Side 1.. Functionally, part of the ABC transporter complex SsuABC involved in aliphatic sulfonates import. Responsible for energy coupling to the transport system. In Frankia alni (strain DSM 45986 / CECT 9034 / ACN14a), this protein is Aliphatic sulfonates import ATP-binding protein SsuB 2.